We begin with the raw amino-acid sequence, 216 residues long: Pyridoxine/pyridoxamine 5'-phosphate oxidase (216 aa).

Residues 9 to 12 (RLSY) and arginine 67 each bind substrate. Residues 62-67 (RIVLLR), 77-78 (YT), lysine 84, and glutamine 106 contribute to the FMN site. The substrate site is built by tyrosine 124, arginine 128, and serine 132. Residues 142–143 (QS) and tryptophan 188 contribute to the FMN site. 194 to 196 (RMH) serves as a coordination point for substrate. Residue arginine 198 coordinates FMN.

Belongs to the pyridoxamine 5'-phosphate oxidase family. As to quaternary structure, homodimer. Requires FMN as cofactor.

The enzyme catalyses pyridoxamine 5'-phosphate + O2 + H2O = pyridoxal 5'-phosphate + H2O2 + NH4(+). It catalyses the reaction pyridoxine 5'-phosphate + O2 = pyridoxal 5'-phosphate + H2O2. Its pathway is cofactor metabolism; pyridoxal 5'-phosphate salvage; pyridoxal 5'-phosphate from pyridoxamine 5'-phosphate: step 1/1. It functions in the pathway cofactor metabolism; pyridoxal 5'-phosphate salvage; pyridoxal 5'-phosphate from pyridoxine 5'-phosphate: step 1/1. In terms of biological role, catalyzes the oxidation of either pyridoxine 5'-phosphate (PNP) or pyridoxamine 5'-phosphate (PMP) into pyridoxal 5'-phosphate (PLP). The chain is Pyridoxine/pyridoxamine 5'-phosphate oxidase from Psychrobacter cryohalolentis (strain ATCC BAA-1226 / DSM 17306 / VKM B-2378 / K5).